Here is a 217-residue protein sequence, read N- to C-terminus: Thiosulfate dehydrogenase electron acceptor (217 aa).

Residues M1–A28 form the signal peptide. Cytochrome c domains are found at residues A29–K104 and A116–P206. 6 residues coordinate heme c: C37, C40, H41, C137, C140, and H141.

Post-translationally, binds 2 heme c groups covalently per subunit.

Acts as an electron acceptor for the thiosulfate dehydrogenase TsdA. The protein is Thiosulfate dehydrogenase electron acceptor (tsdB) of Thiomonas intermedia (strain K12) (Thiobacillus intermedius).